A 250-amino-acid chain; its full sequence is Vacuolar iron transporter 1 (250 aa).

Topologically, residues 1-37 are cytoplasmic; sequence MSSEEDKITRISIEPEKQTLLDHHTEKHFTAGEIVRD. The chain crosses the membrane as a helical span at residues 38–58; that stretch reads IIIGVSDGLTVPFALAAGLSG. Over 59-64 the chain is Vacuolar; sequence ANASSS. Residues 65 to 85 traverse the membrane as a helical segment; sequence IVLTAGIAEVAAGAISMGLGG. The Cytoplasmic portion of the chain corresponds to 86–169; the sequence is YLAAKSEEDH…PDPKRALQSA (84 aa). The cytoplasmic metal binding domain (MBD) stretch occupies residues 91–166; it reads SEEDHYAREM…LEKPDPKRAL (76 aa). Residues glutamate 103, glutamate 106, glutamate 114, glutamate 117, methionine 150, and glutamate 154 each coordinate Fe cation. The helical transmembrane segment at 170–190 threads the bilayer; the sequence is FTIAIAYVLGGFIPLLPYMLI. Topologically, residues 191-192 are vacuolar; the sequence is PH. The chain crosses the membrane as a helical span at residues 193–213; the sequence is AMDAVVASVVITLFALFIFGY. Over 214–227 the chain is Cytoplasmic; it reads AKGHFTGSKPLRSA. The helical transmembrane segment at 228–248 threads the bilayer; it reads FETAFIGAIASAAAFCLAKVV. The Vacuolar portion of the chain corresponds to 249–250; sequence QH.

This sequence belongs to the CCC1 family. Homodimer. The dimeric interaction is mediated by both the transmembrane domains (TMDs) and the cytoplasmic metal binding domain (MBD). In terms of tissue distribution, highly expressed in developing embryo and seed. Expressed in young seedlings, predominantly in the vasculature.

Its subcellular location is the vacuole membrane. It carries out the reaction Fe(2+)(in) = Fe(2+)(out). Vacuolar iron transporter involved in the transfer of iron ions from the cytosol to the vacuole for intracellular iron storage. Involved in regulation of cellular iron homeostasis. Vacuolar iron storage is required for seed embryo and seedling development. The polypeptide is Vacuolar iron transporter 1 (Arabidopsis thaliana (Mouse-ear cress)).